A 253-amino-acid polypeptide reads, in one-letter code: Sulfate transporter CysZ (253 aa).

4 helical membrane-spanning segments follow: residues 31–51, 75–95, 151–171, and 222–242; these read FVIL…WWLF, LLWP…FSTI, IVLL…PVLW, and IPVL…AMWV.

It belongs to the CysZ family.

Its subcellular location is the cell inner membrane. In terms of biological role, high affinity, high specificity proton-dependent sulfate transporter, which mediates sulfate uptake. Provides the sulfur source for the cysteine synthesis pathway. This chain is Sulfate transporter CysZ, found in Citrobacter koseri (strain ATCC BAA-895 / CDC 4225-83 / SGSC4696).